Consider the following 580-residue polypeptide: DNA ligase B (580 aa).

The active-site N6-AMP-lysine intermediate is K135.

It belongs to the NAD-dependent DNA ligase family. LigB subfamily.

It catalyses the reaction NAD(+) + (deoxyribonucleotide)n-3'-hydroxyl + 5'-phospho-(deoxyribonucleotide)m = (deoxyribonucleotide)n+m + AMP + beta-nicotinamide D-nucleotide.. Catalyzes the formation of phosphodiester linkages between 5'-phosphoryl and 3'-hydroxyl groups in double-stranded DNA using NAD as a coenzyme and as the energy source for the reaction. This chain is DNA ligase B, found in Photorhabdus laumondii subsp. laumondii (strain DSM 15139 / CIP 105565 / TT01) (Photorhabdus luminescens subsp. laumondii).